Consider the following 330-residue polypeptide: Aspartate--ammonia ligase (330 aa).

Belongs to the class-II aminoacyl-tRNA synthetase family. AsnA subfamily.

It localises to the cytoplasm. The catalysed reaction is L-aspartate + NH4(+) + ATP = L-asparagine + AMP + diphosphate + H(+). It participates in amino-acid biosynthesis; L-asparagine biosynthesis; L-asparagine from L-aspartate (ammonia route): step 1/1. The polypeptide is Aspartate--ammonia ligase (Aeromonas salmonicida (strain A449)).